A 384-amino-acid chain; its full sequence is Signal peptide peptidase-like 3 (384 aa).

Residues 1–8 lie on the Lumenal side of the membrane; that stretch reads MAEQTYSW. The chain crosses the membrane as a helical span at residues 9–29; that stretch reads AYSLVDSSQVSTFLISILLIV. Topologically, residues 30-73 are cytoplasmic; the sequence is YGSFRSLNMDFENQDKEKDSNSSSGSFNGNSTNNSIQTIDSTQA. A helical transmembrane segment spans residues 74–94; it reads LFLPIGASVSLLVMFFFFDSV. A topological domain (lumenal) is located at residue Gln95. Residues 96–116 form a helical membrane-spanning segment; the sequence is VVFTICTAVLATIAFAFLLLP. The Cytoplasmic portion of the chain corresponds to 117–138; it reads MCQYLTRPCSPQNKISFGCCGR. A helical transmembrane segment spans residues 139-159; the sequence is FTAAELLSFSLSVMLVLIWVL. At 160 to 164 the chain is on the lumenal side; that stretch reads TGHWL. A helical membrane pass occupies residues 165–185; sequence LMDALAMGLCVAMIAFVRLPS. The Cytoplasmic segment spans residues 186 to 190; sequence LKVSC. The helical transmembrane segment at 191–211 threads the bilayer; that stretch reads LLLSGLLIYDVFWVFFSAYIF. The active site involves Asp200. Over 212-262 the chain is Lumenal; sequence NSNVMVKVATQPADNPLDVLSRKLHLGPNVGRDVPRLSLPGKLVFPSSTGS. The helical transmembrane segment at 263 to 283 threads the bilayer; that stretch reads HFSMLGIGDIVMPGLLLCFVL. Asp271 is an active-site residue. Topologically, residues 284–311 are cytoplasmic; sequence RYDNYKKQASGDSCGAPGPANISGRMQK. A helical transmembrane segment spans residues 312 to 332; sequence VSYFHCTLIGYFVGLLTATVA. The Lumenal portion of the chain corresponds to 333 to 339; that stretch reads SRIHRAA. Residues 340–360 form a helical membrane-spanning segment; the sequence is QPALLYLVPFTLLPLLTMAYL. Residues 341 to 343 carry the PAL motif; that stretch reads PAL. Residues 361–384 are Cytoplasmic-facing; it reads KGDLRRMWSEPFHSKSSSSRFLEV.

Belongs to the peptidase A22B family. In terms of assembly, monomer. Homodimer. Interacts with STIM1 (via transmembrane region and SOAR/CAD domain); the interaction promotes the binding of STIM1 to ORAI1. Not glycosylated.

The protein localises to the endoplasmic reticulum membrane. Its subcellular location is the golgi apparatus. The protein resides in the membrane. With respect to regulation, its proteolytic activity is blocked by a signal peptide peptidase (SPP) inhibitor, (ZLL)2-ketone (ZLL) or a gamma-secretase inhibitor, LY411,575. Its function is as follows. Intramembrane-cleaving aspartic protease (I-CLiP) that cleaves type II membrane protein substrates in or close to their luminal transmembrane domain boundaries. Acts like a sheddase by mediating the proteolytic release and secretion of active site-containing ectodomains of glycan-modifiying glycosidase and glycosyltransferase enzymes such as MGAT5, B4GAT1 and B4GALT1. Plays a role in the regulation of cellular glycosylation processes. Required to link T-cell antigen receptor (TCR) and calcineurin-NFAT signaling cascades in lymphocytes by promoting the association of STIM1 and ORAI1 during store-operated calcium entry (SOCE) in a protease-independent manner. The polypeptide is Signal peptide peptidase-like 3 (Mus musculus (Mouse)).